A 791-amino-acid polypeptide reads, in one-letter code: MSDFPGTEELESLDAYWRAANYLTVGQIYLQGNALLTRPLTLADVKPRLLGHWGTSPGLNLVYTHLNRLIHQYSLNVLFVTGPGHGGPALVAQAYLDGTYTELNPSVERNALGMARLFRQFSWPYGIGSHVGPHVPGSIHEGGELGYSLAHAYGAALDNPQLIVACVIGDGEAETGPLAASWHCNKFLNPARDGAVLPILHLNGYKIANPSVLSMISEEELTSLMYGYGYDPYFVEGDEPMEVHRALARTLDVIYEKISQIQRLARYAEDPQVVDRPLWPVLILRTPKGWTGPRYVDGQRVEGTWRSHQLPLADLDKPPHLMQLQQWLESYRPHELFDAQGTLLPELAALTPTGRRRMSANPHANGGLLLRALDLPHYADYCVPMPGPGQVRAEATRVLGGYVRDVMKNSLASQNFRLFGPDETASNRLDAVFEVTDKVWLDARASDDRHLSAQGRVMEILSEHICEGWLEGYLLTGRHGLFSCYEAFIHIVDSMINQHAKWLKTAAEVPWRKPIASLNILLTSHVWRQDHNGFSHQDPGLLDLLANKKANLARIYLPPDANCLLSVAEHCLRSRGYINVIVAGKQMEWQWLDCEAAAVHCQSGIGRWGWACHDDEMPEVVLACAGDVPTLEVLAAVTLLQEQAPDVRVRVVNVVDLMALQLSQQHPHGLSDSDFNGLFTEDRPVIFAFHGYPALIHRLIYKRANPQRFHVRGFREEGATTTPFDMAVINNLDRYQLLLDVFERVPRLQPQLEQARARYWATMEKHKLYLIEHGEDMPEVAQWRWTSASRA.

The protein belongs to the XFP family. Requires thiamine diphosphate as cofactor.

The protein is Probable phosphoketolase of Pseudomonas putida (strain ATCC 700007 / DSM 6899 / JCM 31910 / BCRC 17059 / LMG 24140 / F1).